Reading from the N-terminus, the 218-residue chain is Ras-related protein Rab-11B (218 aa).

Residue glycine 2 is modified to N-acetylglycine. 11 residues coordinate GTP: serine 20, glycine 21, glycine 23, lysine 24, serine 25, asparagine 26, asparagine 37, leucine 38, serine 40, serine 42, and threonine 43. Position 25 (serine 25) interacts with Mg(2+). The Switch 1 motif lies at 36–47 (FNLESKSTIGVE). Threonine 43 and aspartate 66 together coordinate Mg(2+). Residues 67–86 (TAGQERYRAITSAYYRGAVG) carry the Switch 2 motif. GTP-binding residues include glycine 69, asparagine 124, lysine 125, aspartate 127, alanine 155, and leucine 156. The segment at 183–218 (DRSAHDESPGNNVVDISVPPTTDGQKSNKLQCCQNM) is disordered. The segment covering 201 to 218 (PPTTDGQKSNKLQCCQNM) has biased composition (polar residues). 2 S-geranylgeranyl cysteine lipidation sites follow: cysteine 214 and cysteine 215. Cysteine 215 is modified (cysteine methyl ester). A propeptide spans 216-218 (QNM) (removed in mature form).

This sequence belongs to the small GTPase superfamily. Rab family. The cofactor is Mg(2+).

The protein resides in the recycling endosome membrane. It localises to the cytoplasmic vesicle. The protein localises to the secretory vesicle. Its subcellular location is the synaptic vesicle membrane. It is found in the phagosome membrane. It catalyses the reaction GTP + H2O = GDP + phosphate + H(+). Its activity is regulated as follows. Regulated by guanine nucleotide exchange factors (GEFs) which promote the exchange of bound GDP for free GTP. Regulated by GTPase activating proteins (GAPs) which increase the GTP hydrolysis activity. Inhibited by GDP dissociation inhibitors (GDIs) which prevent Rab-GDP dissociation. The small GTPases Rab are key regulators of intracellular membrane trafficking, from the formation of transport vesicles to their fusion with membranes. Rabs cycle between an inactive GDP-bound form and an active GTP-bound form that is able to recruit to membranes different set of downstream effectors directly responsible for vesicle formation, movement, tethering and fusion. That Rab plays a role in endocytic recycling, regulating apical recycling of several transmembrane proteins including cystic fibrosis transmembrane conductance regulator/CFTR, epithelial sodium channel/ENaC, potassium voltage-gated channel, and voltage-dependent L-type calcium channel. May also regulate constitutive and regulated secretion, like insulin granule exocytosis. Required for melanosome transport and release from melanocytes. Also regulates V-ATPase intracellular transport in response to extracellular acidosis. The sequence is that of Ras-related protein Rab-11B from Diplobatis ommata (Ocellated electric ray).